The following is a 915-amino-acid chain: Translation initiation factor IF-2 (915 aa).

A compositionally biased stretch (basic and acidic residues) spans 83 to 94 (QSRRAVEKEQIL). Disordered regions lie at residues 83-177 (QSRR…PEPP), 216-280 (EADR…KPAV), and 293-328 (ISGM…LLRE). Composition is skewed to low complexity over residues 111-129 (VRAA…EAPS) and 137-164 (APAT…LSAP). Residues 165-177 (LPEPVPEPVPEPP) show a composition bias toward pro residues. Positions 293–305 (ISGMDDSSGTGSR) are enriched in polar residues. The span at 314-328 (MEREREQEEADLLRE) shows a compositional bias: basic and acidic residues. The tr-type G domain maps to 412–582 (TRPPVVTIMG…LTEAEMRELK (171 aa)). Positions 421–428 (GHVDHGKT) are G1. A GTP-binding site is contributed by 421–428 (GHVDHGKT). The segment at 446-450 (GITQH) is G2. Positions 468–471 (DTPG) are G3. Residues 468 to 472 (DTPGH) and 522 to 525 (NKMD) contribute to the GTP site. The segment at 522-525 (NKMD) is G4. The interval 558 to 560 (SAK) is G5.

This sequence belongs to the TRAFAC class translation factor GTPase superfamily. Classic translation factor GTPase family. IF-2 subfamily.

Its subcellular location is the cytoplasm. In terms of biological role, one of the essential components for the initiation of protein synthesis. Protects formylmethionyl-tRNA from spontaneous hydrolysis and promotes its binding to the 30S ribosomal subunits. Also involved in the hydrolysis of GTP during the formation of the 70S ribosomal complex. This is Translation initiation factor IF-2 from Chlorobium luteolum (strain DSM 273 / BCRC 81028 / 2530) (Pelodictyon luteolum).